Reading from the N-terminus, the 203-residue chain is uncharacterized protein (203 aa).

The chain crosses the membrane as a helical span at residues 89-109 (CEIPFAACSVLSWSLPTIAAL).

The protein localises to the membrane. This is an uncharacterized protein from Saccharomyces cerevisiae (strain ATCC 204508 / S288c) (Baker's yeast).